The sequence spans 558 residues: Formate--tetrahydrofolate ligase (558 aa).

An ATP-binding site is contributed by 66-73; sequence TPAGEGKT.

It belongs to the formate--tetrahydrofolate ligase family.

The catalysed reaction is (6S)-5,6,7,8-tetrahydrofolate + formate + ATP = (6R)-10-formyltetrahydrofolate + ADP + phosphate. It functions in the pathway one-carbon metabolism; tetrahydrofolate interconversion. The chain is Formate--tetrahydrofolate ligase from Neisseria gonorrhoeae (strain NCCP11945).